The sequence spans 295 residues: Pyridoxal 5'-phosphate synthase subunit PdxS (295 aa).

Asp25 lines the D-ribose 5-phosphate pocket. Catalysis depends on Lys82, which acts as the Schiff-base intermediate with D-ribose 5-phosphate. A D-ribose 5-phosphate-binding site is contributed by Gly154. Position 166 (Arg166) interacts with D-glyceraldehyde 3-phosphate. Residues Gly215 and 236-237 contribute to the D-ribose 5-phosphate site; that span reads GS.

The protein belongs to the PdxS/SNZ family. In the presence of PdxT, forms a dodecamer of heterodimers.

The enzyme catalyses aldehydo-D-ribose 5-phosphate + D-glyceraldehyde 3-phosphate + L-glutamine = pyridoxal 5'-phosphate + L-glutamate + phosphate + 3 H2O + H(+). The protein operates within cofactor biosynthesis; pyridoxal 5'-phosphate biosynthesis. Its function is as follows. Catalyzes the formation of pyridoxal 5'-phosphate from ribose 5-phosphate (RBP), glyceraldehyde 3-phosphate (G3P) and ammonia. The ammonia is provided by the PdxT subunit. Can also use ribulose 5-phosphate and dihydroxyacetone phosphate as substrates, resulting from enzyme-catalyzed isomerization of RBP and G3P, respectively. This Bacillus cereus (strain B4264) protein is Pyridoxal 5'-phosphate synthase subunit PdxS.